The chain runs to 369 residues: Microtubule-associated protein 6 homolog (369 aa).

2 disordered regions span residues 41 to 213 (LPAQ…AADA) and 251 to 369 (AQYK…EAKE). Low complexity predominate over residues 70–80 (APGPARPGTAP). Mn stretches follow at residues 87 to 110 (DSVM…KPKS) and 122 to 145 (ETQY…WIPK). 3 stretches are compositionally biased toward basic and acidic residues: residues 89–110 (VMRH…KPKS), 118–142 (PFEK…DHPW), and 179–209 (EHPK…RGRA). The interval 228 to 251 (SSSYRNEFRPWIDVKPVKAIKAKA) is mn 3. Basic and acidic residues predominate over residues 297–308 (PYKEPPKVEKPS). Basic residues predominate over residues 312–328 (SKPKKTTTSHKPLKKAK). Basic and acidic residues predominate over residues 350–369 (KPEDKEKSKEMNNKLAEAKE).

This sequence belongs to the STOP family.

The protein resides in the cytoplasm. Its subcellular location is the cytoskeleton. Involved in microtubule stabilization in many cell types, including neuronal cells. Specifically has microtubule cold stabilizing activity. Involved in dendrite morphogenesis and maintenance by regulating lysosomal trafficking. This chain is Microtubule-associated protein 6 homolog (MAP6), found in Gallus gallus (Chicken).